The following is a 355-amino-acid chain: Aromatic amino acid aminotransferase (355 aa).

K217 carries the N6-(pyridoxal phosphate)lysine modification.

The protein belongs to the class-II pyridoxal-phosphate-dependent aminotransferase family. Homodimer. The cofactor is pyridoxal 5'-phosphate.

It carries out the reaction an aromatic L-alpha-amino acid + 2-oxoglutarate = an aromatic oxo-acid + L-glutamate. Aminotransferase that catalyzes the conversion of aromatic amino acids and 2-oxoglutarate into corresponding aromatic oxo acids and L-glutamate. The sequence is that of Aromatic amino acid aminotransferase from Mycolicibacterium paratuberculosis (strain ATCC BAA-968 / K-10) (Mycobacterium paratuberculosis).